Here is a 187-residue protein sequence, read N- to C-terminus: High-affinity copper transporter ctrA2 (187 aa).

The next 2 membrane-spanning stretches (helical) occupy residues 44 to 64 and 137 to 157; these read YAGT…LVAF and AAIF…VMTM.

Belongs to the copper transporter (Ctr) (TC 1.A.56) family. SLC31A subfamily.

Its subcellular location is the cell membrane. The enzyme catalyses Cu(2+)(in) = Cu(2+)(out). Functionally, high-affinity copper transporter of plasma membrane that mediates copper uptake under low copper conditions. The mechanism driving the transmembrane transport of copper has still to be determined. Acts as a potential virulence factor. The polypeptide is High-affinity copper transporter ctrA2 (Aspergillus fumigatus (strain ATCC MYA-4609 / CBS 101355 / FGSC A1100 / Af293) (Neosartorya fumigata)).